Consider the following 238-residue polypeptide: tRNA (guanine-N(7)-)-methyltransferase (238 aa).

S-adenosyl-L-methionine contacts are provided by glutamate 70, aspartate 95, aspartate 122, and aspartate 145. The active site involves aspartate 145. Residues lysine 149, aspartate 181, and 216–219 (TKFE) contribute to the substrate site.

Belongs to the class I-like SAM-binding methyltransferase superfamily. TrmB family.

It carries out the reaction guanosine(46) in tRNA + S-adenosyl-L-methionine = N(7)-methylguanosine(46) in tRNA + S-adenosyl-L-homocysteine. It participates in tRNA modification; N(7)-methylguanine-tRNA biosynthesis. Its function is as follows. Catalyzes the formation of N(7)-methylguanine at position 46 (m7G46) in tRNA. This Neisseria meningitidis serogroup A / serotype 4A (strain DSM 15465 / Z2491) protein is tRNA (guanine-N(7)-)-methyltransferase.